The following is a 137-amino-acid chain: MSEVQIVKSFLEELSKTPRNHPDSIPIEKIDETAISITIPAPLVEFQGNLALFEEKKVHVVAKTVRPPIQQASTEINVQSTILELKEVLASQLSTQPSSIRLMYKGKPLVNSRLLDDYVDADSVSEVNLQMFLMNIS.

The region spanning 58 to 135 (VHVVAKTVRP…EVNLQMFLMN (78 aa)) is the Ubiquitin-like domain.

The protein localises to the cytoplasm. The protein resides in the nucleus. This is an uncharacterized protein from Schizosaccharomyces pombe (strain 972 / ATCC 24843) (Fission yeast).